The following is a 149-amino-acid chain: UPF0178 protein HEAR0259 (149 aa).

It belongs to the UPF0178 family.

This is UPF0178 protein HEAR0259 from Herminiimonas arsenicoxydans.